The chain runs to 144 residues: Large ribosomal subunit protein uL16 (144 aa).

The protein belongs to the universal ribosomal protein uL16 family. Part of the 50S ribosomal subunit.

Binds 23S rRNA and is also seen to make contacts with the A and possibly P site tRNAs. The chain is Large ribosomal subunit protein uL16 from Bacillus subtilis (strain 168).